Consider the following 306-residue polypeptide: Putative HPr kinase/phosphorylase 2 (306 aa).

Active-site residues include His-138 and Lys-159. 153 to 160 is an ATP binding site; that stretch reads GESGVGKS. Ser-160 is a binding site for Mg(2+). The active-site Proton acceptor; for phosphorylation activity. Proton donor; for dephosphorylation activity is Asp-177. The important for the catalytic mechanism of both phosphorylation and dephosphorylation stretch occupies residues 201–210; that stretch reads LALRSVGLLN. Residues 264-269 are important for the catalytic mechanism of dephosphorylation; sequence QLQPGR.

This sequence belongs to the HPrK/P family. In terms of assembly, homohexamer. It depends on Mg(2+) as a cofactor.

It carries out the reaction [HPr protein]-L-serine + ATP = [HPr protein]-O-phospho-L-serine + ADP + H(+). The enzyme catalyses [HPr protein]-O-phospho-L-serine + phosphate + H(+) = [HPr protein]-L-serine + diphosphate. Catalyzes the ATP- as well as the pyrophosphate-dependent phosphorylation of a specific serine residue in HPr, a phosphocarrier protein of the phosphoenolpyruvate-dependent sugar phosphotransferase system (PTS). HprK/P also catalyzes the pyrophosphate-producing, inorganic phosphate-dependent dephosphorylation (phosphorolysis) of seryl-phosphorylated HPr (P-Ser-HPr). The two antagonistic activities of HprK/P are regulated by several intracellular metabolites, which change their concentration in response to the absence or presence of rapidly metabolisable carbon sources (glucose, fructose, etc.) in the growth medium. Also phosphorylates/dephosphorylates the HPr-like catabolite repression protein crh on a specific serine residue. Therefore, by controlling the phosphorylation state of HPr and crh, HPrK/P is a sensor enzyme that plays a major role in the regulation of carbon metabolism and sugar transport: it mediates carbon catabolite repression (CCR), and regulates PTS-catalyzed carbohydrate uptake and inducer exclusion. The chain is Putative HPr kinase/phosphorylase 2 (hprK2) from Oceanobacillus iheyensis (strain DSM 14371 / CIP 107618 / JCM 11309 / KCTC 3954 / HTE831).